A 572-amino-acid chain; its full sequence is Na(+)/citrate cotransporter (572 aa).

The next 8 helical transmembrane spans lie at 13-33, 53-73, 80-100, 124-144, 218-238, 255-275, 315-335, and 357-377; these read SFVI…LVPD, VIPV…LKVL, VQYM…ATAV, LMLG…NTAT, AASI…VLLG, SWFA…WLWL, PLSY…ILWF, and HVTD…VPSQ. Asparagine 382 carries an N-linked (GlcNAc...) asparagine glycan. The next 4 helical transmembrane spans lie at 410–430, 443–463, 491–511, and 532–552; these read VPWG…GCET, PLSS…VAMT, PLYV…LPVA, and TGLV…NTWG. Asparagine 566 carries an N-linked (GlcNAc...) asparagine glycan.

It belongs to the SLC13A/DASS transporter (TC 2.A.47) family. NADC subfamily. As to quaternary structure, homodimer. In terms of tissue distribution, expressed in liver, testis and brain.

It is found in the cell membrane. The catalysed reaction is citrate(out) + 4 Na(+)(out) = citrate(in) + 4 Na(+)(in). Its activity is regulated as follows. Inhibited by Li(+). Functionally, high-affinity sodium/citrate cotransporter that mediates citrate entry into cells, which is a critical participant of biochemical pathways. May function in various metabolic processes in which citrate has a critical role such as energy production (Krebs cycle), fatty acid synthesis, cholesterol synthesis, glycolysis, and gluconeogenesis. Transports citrate into the cell in a Na(+)-dependent manner, recognizing the trivalent form of citrate (physiological pH) rather than the divalent form. Can recognize succinate as a substrate, but its affinity for succinate is several fold lower than for citrate. The stoichiometry is probably 4 Na(+) for each carboxylate, irrespective of whether the translocated substrate is divalent or trivalent, rendering the process electrogenic. Involved in the regulation of citrate levels in the brain. This Rattus norvegicus (Rat) protein is Na(+)/citrate cotransporter (Slc13a5).